A 510-amino-acid chain; its full sequence is 2,3-bisphosphoglycerate-independent phosphoglycerate mutase (510 aa).

Positions 13 and 63 each coordinate Mn(2+). The Phosphoserine intermediate role is filled by serine 63. Substrate-binding positions include histidine 124, 154 to 155 (RD), arginine 186, arginine 192, 262 to 265 (RADR), and lysine 334. Residues aspartate 401, histidine 405, aspartate 442, histidine 443, and histidine 461 each contribute to the Mn(2+) site.

This sequence belongs to the BPG-independent phosphoglycerate mutase family. Monomer. Mn(2+) is required as a cofactor.

It carries out the reaction (2R)-2-phosphoglycerate = (2R)-3-phosphoglycerate. It participates in carbohydrate degradation; glycolysis; pyruvate from D-glyceraldehyde 3-phosphate: step 3/5. Catalyzes the interconversion of 2-phosphoglycerate and 3-phosphoglycerate. This chain is 2,3-bisphosphoglycerate-independent phosphoglycerate mutase, found in Vibrio atlanticus (strain LGP32) (Vibrio splendidus (strain Mel32)).